A 310-amino-acid chain; its full sequence is uncharacterized protein (310 aa).

Disordered regions lie at residues 1 to 53 (MSNK…NKEM), 78 to 127 (PIEN…TITN), and 153 to 217 (QQPL…SQML). Residues 11–25 (GEEDEEEDDLYDDYD) are compositionally biased toward acidic residues. Polar residues-rich tracts occupy residues 37-49 (STSM…NISL) and 78-88 (PIENINENPSP). Low complexity-rich tracts occupy residues 94–126 (QTQQ…TTIT), 164–184 (PSPI…QYIT), and 192–208 (YQPI…QIPT). Residues 268-299 (DLIKSVQHNIRQYNDDILTLEEKLEQTEWSLQ) adopt a coiled-coil conformation.

This is an uncharacterized protein from Dictyostelium discoideum (Social amoeba).